The chain runs to 117 residues: Ribosome-binding factor A (117 aa).

It belongs to the RbfA family. In terms of assembly, monomer. Binds 30S ribosomal subunits, but not 50S ribosomal subunits or 70S ribosomes.

The protein resides in the cytoplasm. In terms of biological role, one of several proteins that assist in the late maturation steps of the functional core of the 30S ribosomal subunit. Associates with free 30S ribosomal subunits (but not with 30S subunits that are part of 70S ribosomes or polysomes). Required for efficient processing of 16S rRNA. May interact with the 5'-terminal helix region of 16S rRNA. This Nitrosomonas europaea (strain ATCC 19718 / CIP 103999 / KCTC 2705 / NBRC 14298) protein is Ribosome-binding factor A.